We begin with the raw amino-acid sequence, 314 residues long: Adenosine receptor A3 (314 aa).

At 1 to 14 (MAVNGTALLLANVT) the chain is on the extracellular side. Asparagine 4 and asparagine 12 each carry an N-linked (GlcNAc...) asparagine glycan. The chain crosses the membrane as a helical span at residues 15–37 (YITVEILIGLCAIVGNVLVIWVV). Over 38 to 48 (KLNPSLQTTTF) the chain is Cytoplasmic. The helical transmembrane segment at 49–72 (YFIVSLALADIAVGVLVMPLAIVI) threads the bilayer. Residues 73 to 84 (SLGITIQFYNCL) lie on the Extracellular side of the membrane. A disulfide bond links cysteine 83 and cysteine 166. The helical transmembrane segment at 85–106 (FMTCLLLIFTHASIMSLLAIAV) threads the bilayer. Over 107–126 (DRYLRVKLTVRYRRVTTQRR) the chain is Cytoplasmic. The chain crosses the membrane as a helical span at residues 127-148 (IWLALGLCWLVSFLVGLTPMFG). Residues 149–177 (WNMKLTSEHQRNVTFLSCQFSSVMRMDYM) lie on the Extracellular side of the membrane. An N-linked (GlcNAc...) asparagine glycan is attached at asparagine 160. Residues 178 to 198 (VYFSFFTWILIPLVVMCAIYL) form a helical membrane-spanning segment. Residues 199–231 (DIFYVIRNKLNQNFSSSKETGAFYGREFKTAKS) lie on the Cytoplasmic side of the membrane. A helical transmembrane segment spans residues 232 to 255 (LFLVLFLFAFSWLPLSIINCITYF). The Extracellular segment spans residues 256–261 (HGEVPQ). A helical membrane pass occupies residues 262–284 (IILYLGILLSHANSMMNPIVYAY). The Cytoplasmic portion of the chain corresponds to 285–314 (KIKKFKETYLLIFKTYMICQSSDSLDSSTE). Cysteine 303 carries the S-palmitoyl cysteine lipid modification.

The protein belongs to the G-protein coupled receptor 1 family.

The protein localises to the cell membrane. Its function is as follows. Receptor for adenosine. The activity of this receptor is mediated by G proteins which inhibits adenylyl cyclase. The chain is Adenosine receptor A3 (ADORA3) from Canis lupus familiaris (Dog).